The following is a 196-amino-acid chain: Aequorin-2 (196 aa).

Residues 1 to 7 (MTSKQYS) constitute a propeptide that is removed on maturation. EF-hand domains lie at 18–53 (RWIG…IVIN), 54–108 (NLGA…AKNE), 117–146 (DALF…AGII), and 147–182 (QSSE…FWYT). Residues D31, N33, N35, K37, and E42 each coordinate Ca(2+). 3 may interact with the chromophore regions span residues 47 to 57 (ASDIVINNLGA), 62 to 72 (AKRHKDAVEAF), and 107 to 117 (NEPTLIRIWGD). Ca(2+) contacts are provided by D124, D126, N128, E135, D160, D162, S164, Q166, and E171.

The protein belongs to the aequorin family. In terms of processing, the reduction of the disulfide bond is necessary to regenerate aequorin from apoaequorin.

In terms of biological role, ca(2+)-dependent bioluminescence photoprotein. Displays an emission peak at 470 nm (blue light). Trace amounts of calcium ion trigger the intramolecular oxidation of the chromophore, coelenterazine into coelenteramide and CO(2) with the concomitant emission of light. This is Aequorin-2 from Aequorea victoria (Water jellyfish).